Reading from the N-terminus, the 92-residue chain is Non-specific lipid-transfer protein B (92 aa).

4 cysteine pairs are disulfide-bonded: Cys-3/Cys-51, Cys-13/Cys-28, Cys-29/Cys-74, and Cys-49/Cys-88.

The protein belongs to the plant LTP family.

Plant non-specific lipid-transfer proteins transfer phospholipids as well as galactolipids across membranes. May play a role in wax or cutin deposition in the cell walls of expanding epidermal cells and certain secretory tissues. This Ricinus communis (Castor bean) protein is Non-specific lipid-transfer protein B.